We begin with the raw amino-acid sequence, 364 residues long: Protein spindle-F (364 aa).

The tract at residues 1 to 26 (MEASAAKITPMASSMSASGSTNSPSS) is disordered. The span at 9–26 (TPMASSMSASGSTNSPSS) shows a compositional bias: low complexity. Residues 32 to 114 (ALQVALQTIK…GMVSNENRRL (83 aa)) adopt a coiled-coil conformation. S53 is subject to Phosphoserine. The segment at 56 to 75 (EENQQLREASSRSEGAPRAN) is disordered. Phosphoserine is present on residues S85, S172, and S202. Residues 210–243 (AKRCLDGLQELRREAMKQQQELRSVMTLLENRIA) are a coiled coil. 2 positions are modified to phosphoserine: S264 and S270. The UBZ1-type zinc-finger motif lies at 310-336 (EKTCPMCGKQYSSQVSFNAFREHVEMH). Zn(2+)-binding residues include C313 and C316. S325 is modified (phosphoserine). Residues H332 and H336 each contribute to the Zn(2+) site. S349 bears the Phosphoserine mark.

As to quaternary structure, forms homooligomers. Interacts with the dynein light chain ctp. Interacts (via C-terminus) with IKKepsilon; this leads to phosphorylation of spn-F. Forms ternary complexes with ctp and IKKepsilon; this is required for spn-F redistribution from puncta in larval neurons and for dendrite pruning. Interacts with ctp and IKKepsilon through distinct regions. Interacts (via C-terminus) with jvl. In terms of processing, phosphorylated by IKKepsilon. Phosphorylation is required for spn-F neuronal distribution and dendrite pruning and reduces spn-F homooligomerization. It does not lead to spn-F degradation. In terms of tissue distribution, in pupal bristles, localizes to the bristle tip throughout the elongation period (at protein level).

Its subcellular location is the cytoplasm. It localises to the cytoskeleton. The protein localises to the cell projection. It is found in the axon. The protein resides in the dendrite. Its subcellular location is the perikaryon. Its function is as follows. Plays a role in oocyte axis determination and microtubule organization during oogenesis. Also required for polarized organization of the bristle. Required, with jvl, for activation of the kinase IKKepsilon in the germ line. Also required for localization of IKKepsilon to the distal tip of elongating bristles by acting as an adapter linking IKKepsilon and cytoplasmic dynein. Involved in dendrite pruning in larval sensory neurons during metamorphosis. This is Protein spindle-F from Drosophila melanogaster (Fruit fly).